A 390-amino-acid polypeptide reads, in one-letter code: Caveolae-associated protein 1 (390 aa).

Residue M1 is modified to N-acetylmethionine. Positions M1 to S40 are disordered. The interval M1–K98 is required for homotrimerization and for interaction with CAVIN2 and CAVIN3. Over residues P22–S40 the composition is skewed to low complexity. Residues S36, S40, and S46 each carry the phosphoserine modification. The segment at V52–I62 is nuclear export signal. A leucine-zipper 1 region spans residues L53–L75. Residue K116 forms a Glycyl lysine isopeptide (Lys-Gly) (interchain with G-Cter in SUMO2) linkage. S118 bears the Phosphoserine mark. Residue K122 forms a Glycyl lysine isopeptide (Lys-Gly) (interchain with G-Cter in SUMO2) linkage. The tract at residues K136–K152 is nuclear localization signal. The residue at position 156 (Y156) is a Phosphotyrosine. K161 participates in a covalent cross-link: Glycyl lysine isopeptide (Lys-Gly) (interchain with G-Cter in SUMO1); alternate. Residue K161 forms a Glycyl lysine isopeptide (Lys-Gly) (interchain with G-Cter in SUMO2); alternate linkage. Residue K165 forms a Glycyl lysine isopeptide (Lys-Gly) (interchain with G-Cter in SUMO2) linkage. A leucine-zipper 2 region spans residues L166 to L186. S167 and S169 each carry phosphoserine. K170 is covalently cross-linked (Glycyl lysine isopeptide (Lys-Gly) (interchain with G-Cter in SUMO2)). S171 and S175 each carry phosphoserine. A compositionally biased stretch (basic and acidic residues) spans L172–K181. The disordered stretch occupies residues L172–L201. Residues E182–L201 show a composition bias toward acidic residues. A coiled-coil region spans residues L199–V282. Phosphoserine is present on residues S202 and S203. Positions K233–R249 are nuclear localization signal. Positions L257–L297 are leucine-zipper 3. S300 is modified (phosphoserine). T302 is modified (phosphothreonine). A Phosphotyrosine modification is found at Y308. Residue K326 forms a Glycyl lysine isopeptide (Lys-Gly) (interchain with G-Cter in SUMO2) linkage. A disordered region spans residues V344–S366. Residues G352 to S365 show a composition bias toward basic and acidic residues. Phosphoserine is present on residues S365, S366, S379, S387, and S389.

Belongs to the CAVIN family. Component of the CAVIN complex composed of CAVIN1, CAVIN2, CAVIN3 and CAVIN4. Homotrimer. Interacts with TTF1. Interacts with RNA polymerase I subunit POLR1A/RPA1. Binds the 3' end of pre-rRNA. Interacts with transcription factor ZNF148. Interacts with LIPE in the adipocyte cytoplasm. Interacts with CAV1 and CAVIN3. Interacts with CAVIN2. Interacts with CAVIN4 and CAV3. Phosphorylated. Present in active and inactive forms. Changes in phosphorylation pattern may alter activity. Phosphorylation at Tyr-156 is essential for its functionin the regulation of ribosomal transcriptional activity. Post-translationally, five truncated forms are found in the caveolae. These are thought to be the result of proteolysis and may be phosphorylation-dependent. In terms of processing, monoubiquitinated.

It localises to the membrane. The protein resides in the caveola. Its subcellular location is the cell membrane. The protein localises to the microsome. It is found in the endoplasmic reticulum. It localises to the cytoplasm. The protein resides in the cytosol. Its subcellular location is the mitochondrion. The protein localises to the nucleus. Plays an important role in caveolae formation and organization. Essential for the formation of caveolae in all tissues. Core component of the CAVIN complex which is essential for recruitment of the complex to the caveolae in presence of calveolin-1 (CAV1). Essential for normal oligomerization of CAV1. Promotes ribosomal transcriptional activity in response to metabolic challenges in the adipocytes and plays an important role in the formation of the ribosomal transcriptional loop. Dissociates transcription complexes paused by DNA-bound TTF1, thereby releasing both RNA polymerase I and pre-RNA from the template. The caveolae biogenesis pathway is required for the secretion of proteins such as GASK1A. This chain is Caveolae-associated protein 1, found in Homo sapiens (Human).